Here is a 525-residue protein sequence, read N- to C-terminus: MTQNIHSQRVLILDFGSQYTQLIARRIREVGVFSEIRAFDMTDEEIREYNPKAIILSGGPESVTAGASPRAPEAVFELGVPVLGICYGMQTMAEQLGGRVQSSEVREFGYAQVRVAGESALFRDIKDHVDSDGGALLDVWMSHGDKVIAMPDTFSLLASTPSCPIAGMSWEEKRFYGVQFHPEVTHTLQGKRIFEHFVLEIAGCEPLWTPANIVEDAIERVREKVGSDKVLLGLSGGVDSSVVAALLHRAIGDQLTCVFVDNGLLRKQEGDQVMDMFAKNMGVKVVRADAEDLFLSKLHGINDPEQKRKIIGNTFIEVFDTEAAKLQNVKWLAQGTIYPDVIESAASKTGKAHVIKSHHNVGGLPEDMQFELVEPLRELFKDEVRKIGLELGLPYDMVYRHPFPGPGLGVRILGEVKKEYADILREADAIFIEELRNADWYHKTSQAFAVFLPVKSVGVVGDARRYEWVISLRAVETVDFMTARWAHLPYDLLEKVSNRIINEISGVSRVAYDVSSKPPATIEWE.

The 199-residue stretch at 9 to 207 (RVLILDFGSQ…VLEIAGCEPL (199 aa)) folds into the Glutamine amidotransferase type-1 domain. The active-site Nucleophile is Cys-86. Catalysis depends on residues His-181 and Glu-183. One can recognise a GMPS ATP-PPase domain in the interval 208–400 (WTPANIVEDA…LGLPYDMVYR (193 aa)). 235 to 241 (SGGVDSS) serves as a coordination point for ATP.

In terms of assembly, homodimer.

The catalysed reaction is XMP + L-glutamine + ATP + H2O = GMP + L-glutamate + AMP + diphosphate + 2 H(+). The protein operates within purine metabolism; GMP biosynthesis; GMP from XMP (L-Gln route): step 1/1. Its function is as follows. Catalyzes the synthesis of GMP from XMP. The sequence is that of GMP synthase [glutamine-hydrolyzing] from Teredinibacter turnerae (strain ATCC 39867 / T7901).